The following is a 626-amino-acid chain: Ankyrin repeat domain-containing protein 13B (626 aa).

Methionine 1 bears the N-acetylmethionine mark. ANK repeat units lie at residues 47–76 and 80–109; these read RGRT…DVGR and SGWT…YQRV. Residues 442-474 form a disordered region; that stretch reads PVPSVRGSPSSETPSPGSDSSSVSSSSSTTSCR. A compositionally biased stretch (low complexity) spans 449–472; that stretch reads SPSSETPSPGSDSSSVSSSSSTTS. Residues 503–522 enclose the UIM 1 domain; sequence DDDDLLQFAIQQSLLEAGSE. Disordered regions lie at residues 534 to 590 and 595 to 614; these read NSKP…DEQL and ELSA…EEEE. Positions 554–573 are enriched in pro residues; that stretch reads PPTPQRQPAPPASVPSPRPS. 2 consecutive UIM domains span residues 585–604 and 610–626; these read SYDE…QEER and QEEE…LTEQ.

In terms of assembly, interacts with EGFR (ubiquitinated); the interaction is direct and may regulate EGFR internalization.

It is found in the cell membrane. Its subcellular location is the late endosome. The protein localises to the early endosome. Its function is as follows. Ubiquitin-binding protein that specifically recognizes and binds 'Lys-63'-linked ubiquitin. Does not bind 'Lys-48'-linked ubiquitin. Positively regulates the internalization of ligand-activated EGFR by binding to the Ub moiety of ubiquitinated EGFR at the cell membrane. This is Ankyrin repeat domain-containing protein 13B (ANKRD13B) from Homo sapiens (Human).